A 374-amino-acid chain; its full sequence is Chaperone protein DnaJ (374 aa).

Positions 5–70 (DYYEVLGVER…SKRAAFDQYG (66 aa)) constitute a J domain. The segment at 133–211 (GTTVSIRVPT…CHGEGRVEEY (79 aa)) adopts a CR-type zinc-finger fold. The Zn(2+) site is built by cysteine 146, cysteine 149, cysteine 163, cysteine 166, cysteine 185, cysteine 188, cysteine 199, and cysteine 202. CXXCXGXG motif repeat units follow at residues 146 to 153 (CQPCDGSG), 163 to 170 (CPTCGGIG), 185 to 192 (CPRCHGQG), and 199 to 206 (CTSCHGEG).

Belongs to the DnaJ family. Homodimer. Requires Zn(2+) as cofactor.

It is found in the cytoplasm. In terms of biological role, participates actively in the response to hyperosmotic and heat shock by preventing the aggregation of stress-denatured proteins and by disaggregating proteins, also in an autonomous, DnaK-independent fashion. Unfolded proteins bind initially to DnaJ; upon interaction with the DnaJ-bound protein, DnaK hydrolyzes its bound ATP, resulting in the formation of a stable complex. GrpE releases ADP from DnaK; ATP binding to DnaK triggers the release of the substrate protein, thus completing the reaction cycle. Several rounds of ATP-dependent interactions between DnaJ, DnaK and GrpE are required for fully efficient folding. Also involved, together with DnaK and GrpE, in the DNA replication of plasmids through activation of initiation proteins. The chain is Chaperone protein DnaJ from Pseudomonas putida (strain GB-1).